The following is a 616-amino-acid chain: Dihydroxy-acid dehydratase (616 aa).

Asp81 lines the Mg(2+) pocket. Cys122 is a binding site for [2Fe-2S] cluster. Positions 123 and 124 each coordinate Mg(2+). An N6-carboxylysine modification is found at Lys124. Cys195 is a binding site for [2Fe-2S] cluster. Residue Glu491 participates in Mg(2+) binding. The active-site Proton acceptor is the Ser517.

It belongs to the IlvD/Edd family. As to quaternary structure, homodimer. [2Fe-2S] cluster is required as a cofactor. Mg(2+) serves as cofactor.

It carries out the reaction (2R)-2,3-dihydroxy-3-methylbutanoate = 3-methyl-2-oxobutanoate + H2O. It catalyses the reaction (2R,3R)-2,3-dihydroxy-3-methylpentanoate = (S)-3-methyl-2-oxopentanoate + H2O. Its pathway is amino-acid biosynthesis; L-isoleucine biosynthesis; L-isoleucine from 2-oxobutanoate: step 3/4. It participates in amino-acid biosynthesis; L-valine biosynthesis; L-valine from pyruvate: step 3/4. Functions in the biosynthesis of branched-chain amino acids. Catalyzes the dehydration of (2R,3R)-2,3-dihydroxy-3-methylpentanoate (2,3-dihydroxy-3-methylvalerate) into 2-oxo-3-methylpentanoate (2-oxo-3-methylvalerate) and of (2R)-2,3-dihydroxy-3-methylbutanoate (2,3-dihydroxyisovalerate) into 2-oxo-3-methylbutanoate (2-oxoisovalerate), the penultimate precursor to L-isoleucine and L-valine, respectively. This Salmonella heidelberg (strain SL476) protein is Dihydroxy-acid dehydratase.